The following is a 308-amino-acid chain: Cysteine synthase (308 aa).

Lysine 45 is subject to N6-(pyridoxal phosphate)lysine. Pyridoxal 5'-phosphate-binding positions include asparagine 75, 179–183, and serine 267; that span reads GTGGT.

This sequence belongs to the cysteine synthase/cystathionine beta-synthase family. As to quaternary structure, homodimer. Forms CymR(2):CysK(2) or CymR(4):CysK(4) complexes in the absence of O-acetylserine. Pyridoxal 5'-phosphate serves as cofactor.

The enzyme catalyses O-acetyl-L-serine + hydrogen sulfide = L-cysteine + acetate. It participates in amino-acid biosynthesis; L-cysteine biosynthesis; L-cysteine from L-serine: step 2/2. In terms of biological role, catalyzes the conversion of O-acetylserine to cysteine. Also acts as a sensor of cysteine availability in the signal transduction pathway modulating CymR activity. When cysteine is present, the pool of O-acetylserine (OAS) is low, which leads to the formation of a CymR-CysK complex and transcriptional repression of the CymR regulon occurs. In the absence of cysteine, the OAS pool is high and the CymR-CysK complex is mostly dissociated, leading to a faster dissociation of CymR from its DNA targets and the lifting of CymR-dependent repression. The polypeptide is Cysteine synthase (cysK) (Bacillus subtilis (strain 168)).